A 128-amino-acid polypeptide reads, in one-letter code: Glycine cleavage system H protein (128 aa).

A Lipoyl-binding domain is found at 25–107 (IITVGITHHA…YGAGWFFKLK (83 aa)). Lysine 66 carries the post-translational modification N6-lipoyllysine.

The protein belongs to the GcvH family. The glycine cleavage system is composed of four proteins: P, T, L and H. It depends on (R)-lipoate as a cofactor.

In terms of biological role, the glycine cleavage system catalyzes the degradation of glycine. The H protein shuttles the methylamine group of glycine from the P protein to the T protein. This chain is Glycine cleavage system H protein, found in Neisseria meningitidis serogroup A / serotype 4A (strain DSM 15465 / Z2491).